The following is a 471-amino-acid chain: MTLLQKEYNDVAYISGPLLFVNAASDLAYGAIVNIKDASGRSRGGQVISVTDQNAVIQVFEETRGLDLATASVSLVEDVARLGVSKEMIGRRFDGLGRPIDGLPQVVAEQRLSINGQAMNPAARAKPEEFIQTGISTIDVQTSLIRGQKLPIFSGSGLPHNELAAQIARQAKVPGHEGDFAVVFAAMGLTQREVSFFTQEFERTGALARSVLFLNKADDPAVERLLTPRMALTTAEYLAFEHGYHVLVILTDLTNYCEALREIGGAREEIPGRRGFPGYMYTDLASLYERAGVVEGKPGSVTQVPILSMPDDDITHPIPDLTGYITEGQIVVDRTLNSKGVFPPINPLPSLSRLQGNGIGKGKTRADHKNISDQLFAAYANGLDLRKLVAITGEDALTETDKLYLRFADDFEQYFIGQGDQDRSIDDSLTVAWGILSKLPQSQLTRISKDAIDKYYGTKMDEMWKGSRSLG.

This sequence belongs to the ATPase alpha/beta chains family.

Produces ATP from ADP in the presence of a proton gradient across the membrane. The V-type beta chain is a regulatory subunit. The polypeptide is V-type ATP synthase beta chain (Deinococcus deserti (strain DSM 17065 / CIP 109153 / LMG 22923 / VCD115)).